A 187-amino-acid chain; its full sequence is Protein GrpE (187 aa).

Residues 1-25 (MADEQNLDNRAPEETPAAEGTSAGE) form a disordered region.

The protein belongs to the GrpE family. As to quaternary structure, homodimer.

It localises to the cytoplasm. Its function is as follows. Participates actively in the response to hyperosmotic and heat shock by preventing the aggregation of stress-denatured proteins, in association with DnaK and GrpE. It is the nucleotide exchange factor for DnaK and may function as a thermosensor. Unfolded proteins bind initially to DnaJ; upon interaction with the DnaJ-bound protein, DnaK hydrolyzes its bound ATP, resulting in the formation of a stable complex. GrpE releases ADP from DnaK; ATP binding to DnaK triggers the release of the substrate protein, thus completing the reaction cycle. Several rounds of ATP-dependent interactions between DnaJ, DnaK and GrpE are required for fully efficient folding. The chain is Protein GrpE from Azotobacter vinelandii (strain DJ / ATCC BAA-1303).